Consider the following 311-residue polypeptide: Oxidoreductase NAD-binding domain-containing protein 1 (311 aa).

The first 17 residues, 1–17 (MACAAVMIPGLLRCSVG), serve as a signal peptide directing secretion. Residues 50 to 186 (HMERTASVLR…GGVGINPLLS (137 aa)) enclose the FAD-binding FR-type domain. Residue 178-183 (GVGINP) coordinates NAD(+).

The protein is Oxidoreductase NAD-binding domain-containing protein 1 (OXNAD1) of Pongo abelii (Sumatran orangutan).